The following is a 419-amino-acid chain: Enolase (419 aa).

(2R)-2-phosphoglycerate is bound at residue Gln161. Glu205 functions as the Proton donor in the catalytic mechanism. Positions 240, 283, and 309 each coordinate Mg(2+). (2R)-2-phosphoglycerate-binding residues include Lys334, Arg363, Ser364, and Lys385. Lys334 acts as the Proton acceptor in catalysis.

This sequence belongs to the enolase family. It depends on Mg(2+) as a cofactor.

The protein localises to the cytoplasm. It localises to the secreted. Its subcellular location is the cell surface. It carries out the reaction (2R)-2-phosphoglycerate = phosphoenolpyruvate + H2O. Its pathway is carbohydrate degradation; glycolysis; pyruvate from D-glyceraldehyde 3-phosphate: step 4/5. In terms of biological role, catalyzes the reversible conversion of 2-phosphoglycerate (2-PG) into phosphoenolpyruvate (PEP). It is essential for the degradation of carbohydrates via glycolysis. In Saccharolobus islandicus (strain Y.G.57.14 / Yellowstone #1) (Sulfolobus islandicus), this protein is Enolase.